Consider the following 354-residue polypeptide: 3'-hydroxy-N-methyl-(S)-coclaurine 4'-O-methyltransferase 1 (354 aa).

D223 contacts S-adenosyl-L-methionine. H261 functions as the Proton acceptor in the catalytic mechanism.

The protein belongs to the class I-like SAM-binding methyltransferase superfamily. Cation-independent O-methyltransferase family. COMT subfamily. In terms of tissue distribution, expressed in roots, stems, leaves and flowers. Restricted to sieve elements of the phloem adjacent or proximal to laticifers.

It carries out the reaction (S)-3'-hydroxy-N-methylcoclaurine + S-adenosyl-L-methionine = (S)-reticuline + S-adenosyl-L-homocysteine + H(+). It participates in alkaloid biosynthesis; (S)-reticuline biosynthesis; (S)-reticuline from (S)-norcoclaurine: step 4/4. In terms of biological role, involved in the biosynthesis of benzylisoquinoline alkaloids. Catalyzes the transfer of the methyl group to the 4'-hydroxyl group of 3'-hydroxy-N-methylcoclaurine to form reticuline. Also involved in the papaverine biosynthesis. This is 3'-hydroxy-N-methyl-(S)-coclaurine 4'-O-methyltransferase 1 from Papaver somniferum (Opium poppy).